The sequence spans 817 residues: MSEEKTYKRVEQDDPVPELDIKQGPVRPFIVTDPSAELASLRTMVTLKEKLLVACLAVFTAVIRLHGLAWPDSVVFDEVHFGGFASQYIRGTYFMDVHPPLAKMLYAGVASLGGFQGDFDFENIGDSFPSTTPYVLMRFFSASLGALTVILMYMTLRYSGVRMWVALMSAICFAVENSYVTISRYILLDAPLMFFIAAAVYSFKKYEMYPANSLNAYKSLLATGIALGMASSSKWVGLFTVTWVGLLCIWRLWFMIGDLTKSSKSIFKVAFAKLAFLLGVPFALYLVFFYIHFQSLTLDGDGASFFSPEFRSTLKNNKIPQNVVADVGIGSIISLRHLSTMGGYLHSHSHNYPAGSEQQQSTLYPHMDANNDWLLELYNAPGESLTTFQNLTDGTKVRLFHTVTRCRLHSHDHKPPVSESSDWQKEVSCYGYSGFDGDANDDWVVEIDKKNSAPGVAQERVIALDTKFRLRHAMTGCYLFSHEVKLPAWGFEQQEVTCASSGRHDLTLWYVENNSNPLLPEDTKRISYKPASFISKFIESHKKMWHINKNLVEPHVYESQPTSWPFLLRGISYWGENNRNVYLLGNAIVWWAVTAFIGIFGLIVITELFSWQLGKPILKDSKVVNFHVQVIHYLLGFAVHYAPSFLMQRQMFLHHYLPAYYFGILALGHALDIIVSYVFRSKRQMGYAVVITFLAASVYFFKSFSPIIYGTPWTQELCQKSQWLSGWDYNCNTYFSSLEEYKNQTLTKRESQPAATSTVEEITIEGDGPSYEDLMNEDGKKIFKDTEGNELDPEVVKKMLEEEGANILKVEKRAVLE.

At Ser2 the chain carries N-acetylserine. The Cytoplasmic portion of the chain corresponds to 2–50 (SEEKTYKRVEQDDPVPELDIKQGPVRPFIVTDPSAELASLRTMVTLKEK). A helical membrane pass occupies residues 51–70 (LLVACLAVFTAVIRLHGLAW). The Lumenal segment spans residues 71 to 135 (PDSVVFDEVH…DSFPSTTPYV (65 aa)). A helical transmembrane segment spans residues 136–154 (LMRFFSASLGALTVILMYM). Residues 155–179 (TLRYSGVRMWVALMSAICFAVENSY) are Cytoplasmic-facing. The chain crosses the membrane as a helical span at residues 180–200 (VTISRYILLDAPLMFFIAAAV). Residues 201–234 (YSFKKYEMYPANSLNAYKSLLATGIALGMASSSK) are Lumenal-facing. The chain crosses the membrane as a helical span at residues 235-259 (WVGLFTVTWVGLLCIWRLWFMIGDL). Residues 260 to 273 (TKSSKSIFKVAFAK) lie on the Cytoplasmic side of the membrane. A helical membrane pass occupies residues 274–291 (LAFLLGVPFALYLVFFYI). The Lumenal segment spans residues 292 to 584 (HFQSLTLDGD…GENNRNVYLL (293 aa)). MIR domains lie at 324-378 (VADV…LELY), 388-448 (FQNL…VEID), and 459-514 (ERVI…VENN). N-linked (GlcNAc...) asparagine glycans are attached at residues Asn390 and Asn513. Residues 585–605 (GNAIVWWAVTAFIGIFGLIVI) form a helical membrane-spanning segment. The Cytoplasmic segment spans residues 606–685 (TELFSWQLGK…SYVFRSKRQM (80 aa)). A helical transmembrane segment spans residues 686–710 (GYAVVITFLAASVYFFKSFSPIIYG). The Lumenal segment spans residues 711–817 (TPWTQELCQK…LKVEKRAVLE (107 aa)). Asn743 carries an N-linked (GlcNAc...) asparagine glycan.

Belongs to the glycosyltransferase 39 family. PMT1 and PMT2 form a functional heterodimer. The complex interacts with endoplasmic reticulum proteins EMP24, ERV25, ERP1, ERP2, CDC48, HRD1, USA1, YOS9, ERO1, PDI1, UBR1, Cue4, DFM1 and TED1. Forms also a minor complex with PMT3.

The protein localises to the endoplasmic reticulum membrane. The enzyme catalyses a di-trans,poly-cis-dolichyl beta-D-mannosyl phosphate + L-seryl-[protein] = 3-O-(alpha-D-mannosyl)-L-seryl-[protein] + a di-trans,poly-cis-dolichyl phosphate + H(+). It carries out the reaction a di-trans,poly-cis-dolichyl beta-D-mannosyl phosphate + L-threonyl-[protein] = 3-O-(alpha-D-mannosyl)-L-threonyl-[protein] + a di-trans,poly-cis-dolichyl phosphate + H(+). The protein operates within protein modification; protein glycosylation. Its function is as follows. Protein O-mannosyltransferase involved in O-glycosylation which is essential for cell wall rigidity. Forms a heterodimeric complex with PMT2 and more rarely with PMT3 to transfer mannose from Dol-P-mannose to Ser or Thr residues on proteins. The PMT1-PMT2 complex participates in oxidative protein folding, ER-associated protein degradation (ERAD), as well as ER export. Required for incorporation of proteins in the cell wall. The sequence is that of Dolichyl-phosphate-mannose--protein mannosyltransferase 1 from Saccharomyces cerevisiae (strain ATCC 204508 / S288c) (Baker's yeast).